Reading from the N-terminus, the 186-residue chain is T-cell receptor-associated transmembrane adapter 1 (186 aa).

Over 1 to 7 the chain is Extracellular; the sequence is MSGISGC. Residues 8 to 28 form a helical; Signal-anchor for type III membrane protein membrane-spanning segment; it reads PFFLWGLLALLGLALVISLIF. Topologically, residues 29–186 are cytoplasmic; it reads NISHYVEKQR…LIRAKREPIN (158 aa). Phosphoserine is present on Ser-46. A Phosphotyrosine modification is found at Tyr-79. The segment at 79 to 82 is interaction with PIK3R1; it reads YEQM. The interval 116–140 is disordered; the sequence is SVKGKRRKPRKQNTHFSDKDGDEQL. Positions 118–128 are enriched in basic residues; that stretch reads KGKRRKPRKQN. Positions 131–140 are enriched in basic and acidic residues; that stretch reads FSDKDGDEQL.

Homodimer; disulfide-linked. Interacts with CD3Z. When phosphorylated, interacts with PIK3R1. In terms of processing, phosphorylated on tyrosines by LCK or FYN upon TCR activation. In terms of tissue distribution, strongly expressed in thymus, and to a lesser extent in spleen, lymph node and peripheral blood lymphocytes. Present in T-cells and NK cells, but not B-cells (at protein level).

Its subcellular location is the cell membrane. Functionally, stabilizes the TCR (T-cell antigen receptor)/CD3 complex at the surface of T-cells. In Homo sapiens (Human), this protein is T-cell receptor-associated transmembrane adapter 1 (TRAT1).